The following is a 504-amino-acid chain: Cytochrome P450 71B7 (504 aa).

The helical transmembrane segment at 1–21 threads the bilayer; sequence MSILLCFLCLLPVFLVSLSIL. A Glycyl lysine isopeptide (Lys-Gly) (interchain with G-Cter in ubiquitin) cross-link involves residue lysine 82. A heme-binding site is contributed by cysteine 446.

Belongs to the cytochrome P450 family. Heme is required as a cofactor. As to expression, highly expressed in rosette leaves. Also expressed in roots, leaves, flowers, and siliques.

It is found in the membrane. The sequence is that of Cytochrome P450 71B7 (CYP71B7) from Arabidopsis thaliana (Mouse-ear cress).